A 341-amino-acid polypeptide reads, in one-letter code: tRNA (guanine-N(7)-)-methyltransferase (341 aa).

Residues E75, E100, D127, and D150 each contribute to the S-adenosyl-L-methionine site. Residue D150 is part of the active site. K154 lines the substrate pocket. The segment at 156–161 (RHNKRR) is interaction with RNA. Residue D186 participates in substrate binding.

It belongs to the class I-like SAM-binding methyltransferase superfamily. TrmB family.

The enzyme catalyses guanosine(46) in tRNA + S-adenosyl-L-methionine = N(7)-methylguanosine(46) in tRNA + S-adenosyl-L-homocysteine. It functions in the pathway tRNA modification; N(7)-methylguanine-tRNA biosynthesis. In terms of biological role, catalyzes the formation of N(7)-methylguanine at position 46 (m7G46) in tRNA. The chain is tRNA (guanine-N(7)-)-methyltransferase from Xanthomonas euvesicatoria pv. vesicatoria (strain 85-10) (Xanthomonas campestris pv. vesicatoria).